A 206-amino-acid chain; its full sequence is Translocation protein SEC66 (206 aa).

Over 1 to 27 (MSEFNETKFSNNGTFFETEEPIVETKS) the chain is Lumenal. 2 N-linked (GlcNAc...) asparagine glycosylation sites follow: Asn5 and Asn12. A helical; Signal-anchor for type II membrane protein membrane pass occupies residues 28–48 (ISVYTPLIYVFILVVSLVMFA). Over 49-206 (SSYRKKQAKK…KINNDGRLVN (158 aa)) the chain is Cytoplasmic.

It to S.pombe SpBC409.21. In terms of assembly, component of the heterotetrameric Sec62/63complex composed of SEC62, SEC63, SEC66 and SEC72. The Sec62/63 complex associates with the Sec61 complex to form the Sec complex. Part of a complex consisting of KAR2, SEC63, SEC66 and SEC72.

It is found in the endoplasmic reticulum membrane. Its function is as follows. Acts as a component of the Sec62/63 complex which is involved in SRP-independent post-translational translocation across the endoplasmic reticulum (ER) and functions together with the Sec61 complex and KAR2 in a channel-forming translocon complex. A cycle of assembly and disassembly of Sec62/63 complex from SEC61 may govern the activity of the translocon. SEC66 is required to attach or retain SEC72 in the SEC63 complex. It is essential for growth at elevated temperatures. The polypeptide is Translocation protein SEC66 (SEC66) (Saccharomyces cerevisiae (strain ATCC 204508 / S288c) (Baker's yeast)).